The chain runs to 92 residues: Muconolactone Delta-isomerase (92 aa).

The protein belongs to the muconolactone Delta-isomerase family. Homodecamer.

The catalysed reaction is (S)-muconolactone = (4,5-dihydro-5-oxofuran-2-yl)-acetate. The protein operates within aromatic compound metabolism; beta-ketoadipate pathway; 5-oxo-4,5-dihydro-2-furylacetate from catechol: step 3/3. This is Muconolactone Delta-isomerase (catC) from Cupriavidus pinatubonensis (strain JMP 134 / LMG 1197) (Cupriavidus necator (strain JMP 134)).